Consider the following 289-residue polypeptide: Thioredoxin-like protein 1 (289 aa).

Residues 2–109 (VGVKPVGSDP…EEKIKQHLEN (108 aa)) form the Thioredoxin domain. A disulfide bridge connects residues cysteine 34 and cysteine 37. Residue serine 113 is modified to Phosphoserine. Residues 115–285 (EDTDIPKGYM…NDFKRVVGKK (171 aa)) enclose the PITH domain.

Component of the 19S regulatory cap of the 26S proteasome. Interacts with PSMD14/RPN11. Interacts with, and reduces EEF1A1. In terms of tissue distribution, ubiquitous.

It is found in the cytoplasm. The protein resides in the nucleus. Functionally, active thioredoxin with a redox potential of about -250 mV. The chain is Thioredoxin-like protein 1 (TXNL1) from Homo sapiens (Human).